Here is a 297-residue protein sequence, read N- to C-terminus: 4-hydroxy-tetrahydrodipicolinate synthase (297 aa).

Threonine 47 serves as a coordination point for pyruvate. The active-site Proton donor/acceptor is the tyrosine 136. Lysine 165 (schiff-base intermediate with substrate) is an active-site residue. A pyruvate-binding site is contributed by isoleucine 206.

It belongs to the DapA family. In terms of assembly, homotetramer; dimer of dimers.

It localises to the cytoplasm. The enzyme catalyses L-aspartate 4-semialdehyde + pyruvate = (2S,4S)-4-hydroxy-2,3,4,5-tetrahydrodipicolinate + H2O + H(+). The protein operates within amino-acid biosynthesis; L-lysine biosynthesis via DAP pathway; (S)-tetrahydrodipicolinate from L-aspartate: step 3/4. Functionally, catalyzes the condensation of (S)-aspartate-beta-semialdehyde [(S)-ASA] and pyruvate to 4-hydroxy-tetrahydrodipicolinate (HTPA). The polypeptide is 4-hydroxy-tetrahydrodipicolinate synthase (Campylobacter fetus subsp. fetus (strain 82-40)).